Here is a 360-residue protein sequence, read N- to C-terminus: Nicotinate-nucleotide--dimethylbenzimidazole phosphoribosyltransferase (360 aa).

The active-site Proton acceptor is glutamate 327.

The protein belongs to the CobT family.

The enzyme catalyses 5,6-dimethylbenzimidazole + nicotinate beta-D-ribonucleotide = alpha-ribazole 5'-phosphate + nicotinate + H(+). Its pathway is nucleoside biosynthesis; alpha-ribazole biosynthesis; alpha-ribazole from 5,6-dimethylbenzimidazole: step 1/2. Functionally, catalyzes the synthesis of alpha-ribazole-5'-phosphate from nicotinate mononucleotide (NAMN) and 5,6-dimethylbenzimidazole (DMB). The polypeptide is Nicotinate-nucleotide--dimethylbenzimidazole phosphoribosyltransferase (Shewanella baltica (strain OS185)).